We begin with the raw amino-acid sequence, 149 residues long: Small ribosomal subunit protein uS19w (149 aa).

This sequence belongs to the universal ribosomal protein uS19 family.

It localises to the cytoplasm. The sequence is that of Small ribosomal subunit protein uS19w (RPS15E) from Arabidopsis thaliana (Mouse-ear cress).